The primary structure comprises 1387 residues: Kinesin-like protein KIF15 (1387 aa).

Positions 1–23 are disordered; the sequence is MAPGCKSELRNVTNSHSNQPSNE. Positions 10–22 are enriched in polar residues; that stretch reads RNVTNSHSNQPSN. The Kinesin motor domain occupies 26–363; it reads AIKVFVRIRP…LNFAQRAKLI (338 aa). 109 to 116 is a binding site for ATP; the sequence is GQTGSGKT. Residues 368-1132 are a coiled coil; sequence VVNEDTQGNV…LKMRQLEHVM (765 aa). Serine 568 carries the post-translational modification Phosphoserine. An N6-acetyllysine modification is found at lysine 1009. 2 positions are modified to phosphoserine: serine 1141 and serine 1169.

It belongs to the TRAFAC class myosin-kinesin ATPase superfamily. Kinesin family. KLP2 subfamily. As to quaternary structure, interacts with MKI67 and TPX2. In terms of tissue distribution, expressed in brain (neurons in the external germinal layer of the cerebellum and in ventricular zones) (at protein level). Expressed in spleen and testis.

The protein localises to the cytoplasm. Its subcellular location is the cytoskeleton. It is found in the spindle. Functionally, plus-end directed kinesin-like motor enzyme involved in mitotic spindle assembly. This Mus musculus (Mouse) protein is Kinesin-like protein KIF15 (Kif15).